The primary structure comprises 881 residues: Alanine--tRNA ligase (881 aa).

His564, His568, Cys673, and His677 together coordinate Zn(2+). A disordered region spans residues Gly848–Lys867.

The protein belongs to the class-II aminoacyl-tRNA synthetase family. The cofactor is Zn(2+).

The protein localises to the cytoplasm. The catalysed reaction is tRNA(Ala) + L-alanine + ATP = L-alanyl-tRNA(Ala) + AMP + diphosphate. Its function is as follows. Catalyzes the attachment of alanine to tRNA(Ala) in a two-step reaction: alanine is first activated by ATP to form Ala-AMP and then transferred to the acceptor end of tRNA(Ala). Also edits incorrectly charged Ser-tRNA(Ala) and Gly-tRNA(Ala) via its editing domain. This is Alanine--tRNA ligase from Hyphomonas neptunium (strain ATCC 15444).